The primary structure comprises 835 residues: Replication origin-binding protein (835 aa).

The Helicase ATP-binding domain occupies 54–215; it reads PGMSQTRPVT…SGLRGDENIH (162 aa). 67 to 74 contributes to the ATP binding site; that stretch reads APMGSGKT.

The protein belongs to the herpesviridae OriBP family. As to quaternary structure, homodimer. Interacts with the major DNA-binding protein. Interacts with the helicase/primase component 52 and the polymerase accessory protein.

It localises to the host nucleus. Functionally, functions as a docking protein to recruit essential components of the viral replication machinery to viral DNA origins. In the presence of the major DNA-binding protein, opens dsDNA leading to a conformational change in the origin that facilitates DNA unwinding and subsequent replication. This is Replication origin-binding protein from Varicella-zoster virus (strain Oka vaccine) (HHV-3).